We begin with the raw amino-acid sequence, 301 residues long: GTPase Era (301 aa).

One can recognise an Era-type G domain in the interval 6–173; that stretch reads KSGFVAIVGR…LEQTNANLEI (168 aa). Residues 14–21 are G1; the sequence is GRPNVGKS. 14–21 provides a ligand contact to GTP; the sequence is GRPNVGKS. Residues 40–44 are G2; that stretch reads QTTRN. The G3 stretch occupies residues 61–64; sequence DTPG. GTP-binding positions include 61-65 and 123-126; these read DTPGI and NKID. The G4 stretch occupies residues 123-126; that stretch reads NKID. Residues 152–154 form a G5 region; that stretch reads ISA. Residues 204 to 282 form the KH type-2 domain; sequence TREEVPHSVA…FLEIWVKVQK (79 aa).

The protein belongs to the TRAFAC class TrmE-Era-EngA-EngB-Septin-like GTPase superfamily. Era GTPase family. In terms of assembly, monomer.

The protein resides in the cytoplasm. It localises to the cell membrane. Its function is as follows. An essential GTPase that binds both GDP and GTP, with rapid nucleotide exchange. Plays a role in 16S rRNA processing and 30S ribosomal subunit biogenesis and possibly also in cell cycle regulation and energy metabolism. This Listeria innocua serovar 6a (strain ATCC BAA-680 / CLIP 11262) protein is GTPase Era.